A 413-amino-acid chain; its full sequence is NADH:flavin oxidoreductase FG08077 (413 aa).

53 to 56 (APLC) lines the FMN pocket. Y58 contributes to the substrate binding site. Residues A88 and Q130 each coordinate FMN. 211–214 (HAAH) provides a ligand contact to substrate. FMN is bound by residues R264 and 370 to 371 (GR).

The protein belongs to the NADH:flavin oxidoreductase/NADH oxidase family. NamA subfamily. FMN is required as a cofactor.

The protein operates within mycotoxin biosynthesis. NADH:flavin oxidoreductase; part of the gene cluster that mediates the biosynthesis of butenolide, a mycotoxin that shows antibiotic activity but does not seem to play a major role in the spread of head blight in wheat. Butenolide is derived from glutamic acid via a 4-acetamido-2-butenoic acid intermediate. The predicted function of the NADH:flavin oxidoreductase FG08077, the cytochrome P450 monooxygenase FG08079, the decarboxylase FG08083, and the putative acetyltransferase FG08082 are consistent with this pathway, however, the respective activities of the butelonide biosynthesis cluster enzymes have still to be experimentally determined. The chain is NADH:flavin oxidoreductase FG08077 from Gibberella zeae (strain ATCC MYA-4620 / CBS 123657 / FGSC 9075 / NRRL 31084 / PH-1) (Wheat head blight fungus).